Here is a 725-residue protein sequence, read N- to C-terminus: ATP-dependent zinc metalloprotease FtsH (725 aa).

Over 1-11 (MDKMKKPKINW) the chain is Cytoplasmic. Residues 12–32 (LLIVIVGIIAALLITVLVLLF) form a helical membrane-spanning segment. Residues 33-160 (SPKTQPKSFD…LFGQHIVQEN (128 aa)) are Extracellular-facing. The helical transmembrane segment at 161–181 (GFITFIKAIWFPALIAIIIFL) threads the bilayer. Residues 182–725 (GYKAQSRAAS…EEETLAEKAE (544 aa)) lie on the Cytoplasmic side of the membrane. 252–259 (GPPGTGKT) contacts ATP. Residue His-474 participates in Zn(2+) binding. Residue Glu-475 is part of the active site. The Zn(2+) site is built by His-478 and Asp-552. Positions 680-725 (QVNESQEKDKQKNAQIKEDLSKMDKKDNLTKAKDKGEEETLAEKAE) are disordered. Over residues 684-725 (SQEKDKQKNAQIKEDLSKMDKKDNLTKAKDKGEEETLAEKAE) the composition is skewed to basic and acidic residues.

The protein in the central section; belongs to the AAA ATPase family. In the C-terminal section; belongs to the peptidase M41 family. As to quaternary structure, homohexamer. Requires Zn(2+) as cofactor.

The protein localises to the cell membrane. Its function is as follows. Acts as a processive, ATP-dependent zinc metallopeptidase for both cytoplasmic and membrane proteins. Plays a role in the quality control of integral membrane proteins. In Mycoplasmopsis pulmonis (strain UAB CTIP) (Mycoplasma pulmonis), this protein is ATP-dependent zinc metalloprotease FtsH.